The following is a 62-amino-acid chain: Large ribosomal subunit protein uL30 (62 aa).

It belongs to the universal ribosomal protein uL30 family. In terms of assembly, part of the 50S ribosomal subunit.

The chain is Large ribosomal subunit protein uL30 from Paracoccus denitrificans (strain Pd 1222).